A 204-amino-acid chain; its full sequence is Somatotropin (204 aa).

Residues 1 to 17 (MDRAVLLLSVLSLGVSS) form the signal peptide. At Q18 the chain carries Pyrrolidone carboxylic acid. Position 35 (H35) interacts with Zn(2+). C69 and C177 are joined by a disulfide. Residue E186 participates in Zn(2+) binding. An intrachain disulfide couples C194 to C202.

This sequence belongs to the somatotropin/prolactin family.

Its subcellular location is the secreted. Its function is as follows. Growth hormone plays an important role in growth control and is involved in the regulation of several anabolic processes. Implicated as an osmoregulatory substance important for seawater adaptation. The protein is Somatotropin (gh) of Morone saxatilis (Striped bass).